Reading from the N-terminus, the 148-residue chain is SsrA-binding protein (148 aa).

Residues 129 to 142 (ETEKKRDWEREKAR) show a composition bias toward basic and acidic residues. Residues 129–148 (ETEKKRDWEREKARIMRAGT) are disordered.

The protein belongs to the SmpB family.

Its subcellular location is the cytoplasm. In terms of biological role, required for rescue of stalled ribosomes mediated by trans-translation. Binds to transfer-messenger RNA (tmRNA), required for stable association of tmRNA with ribosomes. tmRNA and SmpB together mimic tRNA shape, replacing the anticodon stem-loop with SmpB. tmRNA is encoded by the ssrA gene; the 2 termini fold to resemble tRNA(Ala) and it encodes a 'tag peptide', a short internal open reading frame. During trans-translation Ala-aminoacylated tmRNA acts like a tRNA, entering the A-site of stalled ribosomes, displacing the stalled mRNA. The ribosome then switches to translate the ORF on the tmRNA; the nascent peptide is terminated with the 'tag peptide' encoded by the tmRNA and targeted for degradation. The ribosome is freed to recommence translation, which seems to be the essential function of trans-translation. This chain is SsrA-binding protein, found in Burkholderia lata (strain ATCC 17760 / DSM 23089 / LMG 22485 / NCIMB 9086 / R18194 / 383).